We begin with the raw amino-acid sequence, 448 residues long: Probable glycine dehydrogenase (decarboxylating) subunit 1 (448 aa).

The protein belongs to the GcvP family. N-terminal subunit subfamily. As to quaternary structure, the glycine cleavage system is composed of four proteins: P, T, L and H. In this organism, the P 'protein' is a heterodimer of two subunits.

It catalyses the reaction N(6)-[(R)-lipoyl]-L-lysyl-[glycine-cleavage complex H protein] + glycine + H(+) = N(6)-[(R)-S(8)-aminomethyldihydrolipoyl]-L-lysyl-[glycine-cleavage complex H protein] + CO2. The glycine cleavage system catalyzes the degradation of glycine. The P protein binds the alpha-amino group of glycine through its pyridoxal phosphate cofactor; CO(2) is released and the remaining methylamine moiety is then transferred to the lipoamide cofactor of the H protein. In Geobacillus kaustophilus (strain HTA426), this protein is Probable glycine dehydrogenase (decarboxylating) subunit 1.